The chain runs to 251 residues: Dihydroorotate dehydrogenase B (NAD(+)), electron transfer subunit homolog (251 aa).

Positions 2-101 (LAELNAEVLE…FLPLGKRLFS (100 aa)) constitute an FAD-binding FR-type domain. Positions 217, 222, 225, and 238 each coordinate [2Fe-2S] cluster.

It belongs to the PyrK family. It depends on [2Fe-2S] cluster as a cofactor. Requires FAD as cofactor.

The protein is Dihydroorotate dehydrogenase B (NAD(+)), electron transfer subunit homolog of Aquifex aeolicus (strain VF5).